The chain runs to 328 residues: D-alanine--D-alanine ligase (328 aa).

An ATP-grasp domain is found at 118 to 317 (LSVLTKFNIP…MPQMLDNEIT (200 aa)). 146–201 (KKALGLPFFVKPNQSGSSLGVSKVDALDQLEKALEFAFAEDNEILIESYLNGTEVS) lines the ATP pocket. Mg(2+)-binding residues include D272, E284, and N286.

The protein belongs to the D-alanine--D-alanine ligase family. Mg(2+) is required as a cofactor. Requires Mn(2+) as cofactor.

The protein resides in the cytoplasm. The enzyme catalyses 2 D-alanine + ATP = D-alanyl-D-alanine + ADP + phosphate + H(+). It participates in cell wall biogenesis; peptidoglycan biosynthesis. Functionally, cell wall formation. This Flavobacterium psychrophilum (strain ATCC 49511 / DSM 21280 / CIP 103535 / JIP02/86) protein is D-alanine--D-alanine ligase.